The chain runs to 379 residues: Retron Se72 reverse transcriptase (379 aa).

The region spanning 1–245 (MNKPRFNGTP…SKLSVTGLWV (245 aa)) is the Reverse transcriptase domain. The Mg(2+) site is built by D109, D188, and D189.

Belongs to the bacterial reverse transcriptase family.

It catalyses the reaction DNA(n) + a 2'-deoxyribonucleoside 5'-triphosphate = DNA(n+1) + diphosphate. Functionally, reverse transcriptase (RT) component of antiviral defense system retron Se72, composed of a non-coding RNA (ncRNA), this reverse transcriptase (RT) and the following cold shock-like protein. Expression of retron Se72 confers protection against bacteriophage lambda. At multiplicity of infection (MOI) of 0.02 cultures slow growth when infected with lambda but do not collapse, at MOI 2 cultures enter growth stasis. Responsible for synthesis of msDNA (a branched molecule with RNA linked by a 2',5'-phosphodiester bond to ssDNA). The retron transcript serves as primer (from a conserved internal G residue) and template for the reaction, and codes for the RT. The DNA segment is predicted to be 72 bases long. This is Retron Se72 reverse transcriptase from Salmonella heidelberg (strain 579083-10).